The primary structure comprises 99 residues: Protein Tat (99 aa).

The interaction with human CREBBP stretch occupies residues 1–24; that stretch reads MDPVDPKLEPWNHPGSQPQTACNN. The segment at 1-48 is transactivation; it reads MDPVDPKLEPWNHPGSQPQTACNNCYCKKCCYHCQMCFLKKGLGISYG. Zn(2+) contacts are provided by Cys22, Cys25, and Cys27. The interval 22 to 37 is cysteine-rich; the sequence is CNNCYCKKCCYHCQMC. N6-acetyllysine; by host PCAF is present on Lys28. Zn(2+) contacts are provided by Cys30, His33, Cys34, and Cys37. The core stretch occupies residues 38–48; the sequence is FLKKGLGISYG. Positions 48 to 58 are enriched in basic residues; it reads GRKKRSQRHRT. A disordered region spans residues 48–99; the sequence is GRKKRSQRHRTPASLQDHQNSISKQPLSRTHGDPTGPKEQKKEVASKTETDP. The short motif at 49–57 is the Nuclear localization signal, RNA-binding (TAR), and protein transduction element; it reads RKKRSQRHR. Residues 49 to 86 are interaction with the host capping enzyme RNGTT; that stretch reads RKKRSQRHRTPASLQDHQNSISKQPLSRTHGDPTGPKE. N6-acetyllysine; by host EP300 and GCN5L2 is present on residues Lys50 and Lys51. Position 52 is an asymmetric dimethylarginine; by host PRMT6 (Arg52). The segment covering 60–75 has biased composition (polar residues); the sequence is ASLQDHQNSISKQPLS. A Glycyl lysine isopeptide (Lys-Gly) (interchain with G-Cter in ubiquitin) cross-link involves residue Lys71. A compositionally biased stretch (basic and acidic residues) spans 77–99; that stretch reads THGDPTGPKEQKKEVASKTETDP.

The protein belongs to the lentiviruses Tat family. In terms of assembly, interacts with host CCNT1. Associates with the P-TEFb complex composed at least of Tat, P-TEFb (CDK9 and CCNT1), TAR RNA, RNA Pol II. Recruits the HATs CREBBP, TAF1/TFIID, EP300, PCAF and GCN5L2. Interacts with host KAT5/Tip60; this interaction targets the latter to degradation. Interacts with the host deacetylase SIRT1. Interacts with host capping enzyme RNGTT; this interaction stimulates RNGTT. Binds to host KDR, and to the host integrins ITGAV/ITGB3 and ITGA5/ITGB1. Interacts with host KPNB1/importin beta-1 without previous binding to KPNA1/importin alpha-1. Interacts with EIF2AK2. Interacts with host nucleosome assembly protein NAP1L1; this interaction may be required for the transport of Tat within the nucleus, since the two proteins interact at the nuclear rim. Interacts with host C1QBP/SF2P32; this interaction involves lysine-acetylated Tat. Interacts with the host chemokine receptors CCR2, CCR3 and CXCR4. Interacts with host DPP4/CD26; this interaction may trigger an anti-proliferative effect. Interacts with host LDLR. Interacts with the host extracellular matrix metalloproteinase MMP1. Interacts with host PRMT6; this interaction mediates Tat's methylation. Interacts with, and is ubiquitinated by MDM2/Hdm2. Interacts with host PSMC3 and HTATIP2. Interacts with STAB1; this interaction may overcome SATB1-mediated repression of IL2 and IL2RA (interleukin) in T cells by binding to the same domain than HDAC1. Interacts (when acetylated) with human CDK13, thereby increasing HIV-1 mRNA splicing and promoting the production of the doubly spliced HIV-1 protein Nef. Interacts with host TBP; this interaction modulates the activity of transcriptional pre-initiation complex. Interacts with host RELA. Interacts with host PLSCR1; this interaction negatively regulates Tat transactivation activity by altering its subcellular distribution. In terms of processing, asymmetrical arginine methylation by host PRMT6 seems to diminish the transactivation capacity of Tat and affects the interaction with host CCNT1. Acetylation by EP300, CREBBP, GCN5L2/GCN5 and PCAF regulates the transactivation activity of Tat. EP300-mediated acetylation of Lys-50 promotes dissociation of Tat from the TAR RNA through the competitive binding to PCAF's bromodomain. In addition, the non-acetylated Tat's N-terminus can also interact with PCAF. PCAF-mediated acetylation of Lys-28 enhances Tat's binding to CCNT1. Lys-50 is deacetylated by SIRT1. Post-translationally, polyubiquitination by host MDM2 does not target Tat to degradation, but activates its transactivation function and fosters interaction with CCNT1 and TAR RNA. In terms of processing, phosphorylated by EIF2AK2 on serine and threonine residues adjacent to the basic region important for TAR RNA binding and function. Phosphorylation of Tat by EIF2AK2 is dependent on the prior activation of EIF2AK2 by dsRNA.

The protein resides in the host nucleus. The protein localises to the host nucleolus. Its subcellular location is the host cytoplasm. It is found in the secreted. Transcriptional activator that increases RNA Pol II processivity, thereby increasing the level of full-length viral transcripts. Recognizes a hairpin structure at the 5'-LTR of the nascent viral mRNAs referred to as the transactivation responsive RNA element (TAR) and recruits the cyclin T1-CDK9 complex (P-TEFb complex) that will in turn hyperphosphorylate the RNA polymerase II to allow efficient elongation. The CDK9 component of P-TEFb and other Tat-activated kinases hyperphosphorylate the C-terminus of RNA Pol II that becomes stabilized and much more processive. Other factors such as HTATSF1/Tat-SF1, SUPT5H/SPT5, and HTATIP2 are also important for Tat's function. Besides its effect on RNA Pol II processivity, Tat induces chromatin remodeling of proviral genes by recruiting the histone acetyltransferases (HATs) CREBBP, EP300 and PCAF to the chromatin. This also contributes to the increase in proviral transcription rate, especially when the provirus integrates in transcriptionally silent region of the host genome. To ensure maximal activation of the LTR, Tat mediates nuclear translocation of NF-kappa-B by interacting with host RELA. Through its interaction with host TBP, Tat may also modulate transcription initiation. Tat can reactivate a latently infected cell by penetrating in it and transactivating its LTR promoter. In the cytoplasm, Tat is thought to act as a translational activator of HIV-1 mRNAs. In terms of biological role, extracellular circulating Tat can be endocytosed by surrounding uninfected cells via the binding to several surface receptors such as CD26, CXCR4, heparan sulfate proteoglycans (HSPG) or LDLR. Neurons are rarely infected, but they internalize Tat via their LDLR. Through its interaction with nuclear HATs, Tat is potentially able to control the acetylation-dependent cellular gene expression. Modulates the expression of many cellular genes involved in cell survival, proliferation or in coding for cytokines or cytokine receptors. Tat plays a role in T-cell and neurons apoptosis. Tat induced neurotoxicity and apoptosis probably contribute to neuroAIDS. Circulating Tat also acts as a chemokine-like and/or growth factor-like molecule that binds to specific receptors on the surface of the cells, affecting many cellular pathways. In the vascular system, Tat binds to ITGAV/ITGB3 and ITGA5/ITGB1 integrins dimers at the surface of endothelial cells and competes with bFGF for heparin-binding sites, leading to an excess of soluble bFGF. This chain is Protein Tat, found in Homo sapiens (Human).